A 531-amino-acid polypeptide reads, in one-letter code: MEKVRSRVGWLYRRQDSQGAVQLRKRKSRLYSKEASSACPGAGLFGENTYLVLAAVGFRIFNCMMVQTSFVPDEYWQSLEVAHNMTFNYGYLTWEWTEGLRGFSYPLMFAAIYKVLYLLGKDHVWFLIWIPRLAQAVLSGIADVRLYSLVRHLENTELAKWVYFCQLCSWFTWYCATRTLTNTMEAVLSTFALYYYPLEGSSTNSSTKYLICVALAFLIRPTAVILWIPLLFYHFAKEKKKAELVVQQYLPIGILTLAASLTVDRIFFGKWTFVQWNFLKFNVLQDLGSFYGSHPWHWYITQGVPVILCTHLPFFIHGCMVTPKRYQILLVAVAWTVLTYSALSHKEFRFIYPVLPVCMVFCGFSFSNLKRWKKAAVGFLVLSNLFPALYTGLIHQRGALDIMSGIQKLCKMENSSASLFVLMPCHSIPFYSHVHCPIKMNFLECPPDLSDSDAYIDEADLFYVSPLAWLNAEFYNKTLLPTHLIMFSVLEPEIRSFLTNNNYLKSMSVFHTHLPEGRTGSHIYMYERNSK.

An N-linked (GlcNAc...) asparagine glycan is attached at Asn-84. 3 consecutive transmembrane segments (helical) span residues 99–119 (GLRGFSYPLMFAAIYKVLYLL), 124–144 (VWFLIWIPRLAQAVLSGIADV), and 174–196 (YCATRTLTNTMEAVLSTFALYYY). N-linked (GlcNAc...) asparagine glycosylation occurs at Asn-204. Transmembrane regions (helical) follow at residues 210-230 (LICVALAFLIRPTAVILWIPL), 249-269 (YLPIGILTLAASLTVDRIFFG), 303-323 (GVPVILCTHLPFFIHGCMVTP), 328-348 (ILLVAVAWTVLTYSALSHKEF), 350-370 (FIYPVLPVCMVFCGFSFSNLK), and 375-395 (AAVGFLVLSNLFPALYTGLIH). N-linked (GlcNAc...) asparagine glycans are attached at residues Asn-414 and Asn-476.

Belongs to the glycosyltransferase 22 family. PIGB subfamily.

It is found in the endoplasmic reticulum membrane. It participates in glycolipid biosynthesis; glycosylphosphatidylinositol-anchor biosynthesis. Alpha-1,2-mannosyltransferase that catalyzes the transfer of the third mannose, via an alpha-1,2 bond, from a dolichol-phosphate-mannose (Dol-P-Man) to an alpha-D-Man-(1-&gt;6)-2-PEtn-alpha-D-Man-(1-&gt;4)-alpha-D-GlcN-(1-&gt;6)-(1-radyl,2-acyl-sn-glycero-3-phospho)-2-acyl-inositol intermediate to generate an alpha-D-Man-(1-&gt;2)-alpha-D-Man-(1-&gt;6)-2-PEtn-alpha-D-Man-(1-&gt;4)-alpha-D-GlcN-(1-&gt;6)-(1-radyl,2-acyl-sn-glycero-3-phospho)-2-acyl-inositol (also termed H6) and participates in the nineth step of the glycosylphosphatidylinositol-anchor biosynthesis. May also add the third mannose to an alpha-D-Man-(1-&gt;6)-alpha-D-Man-(1-&gt;4)-alpha-D-GlcN-(1-&gt;6)-(1-radyl,2-acyl-sn-glycero-3-phospho)-2-acyl-inositol (also termed H3) intermediate generating an alpha-D-Man-(1-&gt;2)-alpha-D-Man-(1-&gt;6)-alpha-D-Man-(1-&gt;4)-alpha-D-GlcN-(1-&gt;6)-(1-radyl,2-acyl-sn-glycero-3-phospho)-2-acyl-inositol (also termed H4). This is GPI alpha-1,2-mannosyltransferase 3 from Xenopus laevis (African clawed frog).